Consider the following 199-residue polypeptide: Thymidine kinase (199 aa).

Residues 23–30 and 95–98 each bind ATP; these read GSMFSGKT and DEAQ. The active-site Proton acceptor is the glutamate 96. Zn(2+) is bound by residues cysteine 152, cysteine 155, cysteine 184, and cysteine 187.

Belongs to the thymidine kinase family. Homotetramer.

It is found in the cytoplasm. The enzyme catalyses thymidine + ATP = dTMP + ADP + H(+). The chain is Thymidine kinase from Bacteroides fragilis (strain ATCC 25285 / DSM 2151 / CCUG 4856 / JCM 11019 / LMG 10263 / NCTC 9343 / Onslow / VPI 2553 / EN-2).